The sequence spans 335 residues: MEITKTLGEFIVDHQNQYPTATGELSALFSSIRLAGKIVHREVNKAGLADIRGAAGGDNIQGEAQQKLDVYANEKFKAALSARGVVCGLASEEEDSFVAFDGQRSLQGKYVVLIDPLDGSSNIDVNVSVGTIFSIYRRISKTGGPVTLEDFLQPGRAQVAAGYIVYGSSTMLVYSTGDGVNGFTYDPSLGVFCLSHENMRCPPEGNIYSVNEGNYVHFPSGIKKYIKFCQEEDKPSGRPYTSRYIGSLVSDFHRNLIKGGIYLYPTSSTYPSGKLRLLYECNPMAFLAEQAGGKALAGVNQPVLDIVPSELHQRSPLIIGSSRMVDKACEFLSEK.

Residues Glu92, Asp115, Leu117, and Asp118 each coordinate Mg(2+). Substrate is bound by residues 118–121, Asn211, Tyr244, 262–264, and Lys274; these read DGSS and YLY. Glu280 lines the Mg(2+) pocket.

The protein belongs to the FBPase class 1 family. Homotetramer. The cofactor is Mg(2+).

Its subcellular location is the cytoplasm. The enzyme catalyses beta-D-fructose 1,6-bisphosphate + H2O = beta-D-fructose 6-phosphate + phosphate. It participates in carbohydrate biosynthesis; gluconeogenesis. This is Fructose-1,6-bisphosphatase class 1 from Teredinibacter turnerae (strain ATCC 39867 / T7901).